The following is a 405-amino-acid chain: MADVKKVVLAYSGGLDTSVILKWLQDTYNCEVVTFTADLGQGEEVEPARAKAQALGVKEIYIDDLREEFVRDFVYPMFRANTIYEGEYLLGTSIARPLIAKRLIEIANETGADAISHGATGKGNDQVRFELGAYALKPGVKVIAPWREWDLLSREKLMDYAEKHAIPIERHGKKKSPYSMDANLLHISYEGGVLEDTWTEHEEDMWRWTKSPEAAPDTPTYIELTYQAGDIVAIDGKAMTPAQVLAELNRIGGENGIGRLDIVENRYVGMKSRGCYETPGGTIMLKAHRAIESITLDREVAHLKDELMPKYASLIYNGFWWSPERLMLQQMIDASQANVNGVVRLKLYKGNVIVTGRKSDDSLFDANIATFEEDGGAYNQQDAAGFIKLNALRMRIAAGKGRKLI.

ATP is bound by residues 10-18 (AYSGGLDTS) and Ala37. L-citrulline-binding residues include Tyr88 and Ser93. An ATP-binding site is contributed by Gly118. L-aspartate contacts are provided by Thr120, Asn124, and Asp125. Asn124 contacts L-citrulline. L-citrulline-binding residues include Arg128, Ser179, Ser188, Glu264, and Tyr276.

It belongs to the argininosuccinate synthase family. Type 1 subfamily. As to quaternary structure, homotetramer.

The protein resides in the cytoplasm. It carries out the reaction L-citrulline + L-aspartate + ATP = 2-(N(omega)-L-arginino)succinate + AMP + diphosphate + H(+). The protein operates within amino-acid biosynthesis; L-arginine biosynthesis; L-arginine from L-ornithine and carbamoyl phosphate: step 2/3. The polypeptide is Argininosuccinate synthase (Ectopseudomonas mendocina (strain ymp) (Pseudomonas mendocina)).